Reading from the N-terminus, the 319-residue chain is Ferrochelatase (319 aa).

Fe cation is bound by residues His-192 and Glu-271.

The protein belongs to the ferrochelatase family.

The protein resides in the cytoplasm. The catalysed reaction is heme b + 2 H(+) = protoporphyrin IX + Fe(2+). Its pathway is porphyrin-containing compound metabolism; protoheme biosynthesis; protoheme from protoporphyrin-IX: step 1/1. In terms of biological role, catalyzes the ferrous insertion into protoporphyrin IX. This is Ferrochelatase from Geotalea uraniireducens (strain Rf4) (Geobacter uraniireducens).